Consider the following 699-residue polypeptide: UvrABC system protein C (699 aa).

The span at 1 to 51 shows a compositional bias: low complexity; that stretch reads MIQHPTDTPEVAADAAAEPERAAGAAGATPQPSQDAVEPAADVDAATASLA. The tract at residues 1–59 is disordered; it reads MIQHPTDTPEVAADAAAEPERAAGAAGATPQPSQDAVEPAADVDAATASLAAEDDDEPV. Residues 92–170 form the GIY-YIG domain; the sequence is TSPGVYRMLN…IKQLRPRFNV (79 aa). The region spanning 280-315 is the UVR domain; it reads RLVKQELAGEMEKASAELEFETAALYRDRLAALSAI.

It belongs to the UvrC family. As to quaternary structure, interacts with UvrB in an incision complex.

The protein localises to the cytoplasm. Its function is as follows. The UvrABC repair system catalyzes the recognition and processing of DNA lesions. UvrC both incises the 5' and 3' sides of the lesion. The N-terminal half is responsible for the 3' incision and the C-terminal half is responsible for the 5' incision. This is UvrABC system protein C from Rhodopseudomonas palustris (strain BisB18).